We begin with the raw amino-acid sequence, 114 residues long: Iron-sulfur cluster insertion protein ErpA (114 aa).

Residues Cys42, Cys106, and Cys108 each contribute to the iron-sulfur cluster site.

Belongs to the HesB/IscA family. In terms of assembly, homodimer. Requires iron-sulfur cluster as cofactor.

In terms of biological role, required for insertion of 4Fe-4S clusters for at least IspG. This chain is Iron-sulfur cluster insertion protein ErpA, found in Buchnera aphidicola subsp. Acyrthosiphon pisum (strain 5A).